Here is a 379-residue protein sequence, read N- to C-terminus: Type II methyltransferase M.CvrRI (379 aa).

The protein belongs to the N(4)/N(6)-methyltransferase family.

The enzyme catalyses a 2'-deoxyadenosine in DNA + S-adenosyl-L-methionine = an N(6)-methyl-2'-deoxyadenosine in DNA + S-adenosyl-L-homocysteine + H(+). Its function is as follows. A gamma subtype methylase, recognizes the double-stranded sequence 5'-TGCA-3', methylates A-4 on both strands, and protects the DNA from cleavage by the CviRI endonuclease. The protein is Type II methyltransferase M.CvrRI (CVIRIM) of Chlorella (PBCV-XZ-6E).